A 307-amino-acid polypeptide reads, in one-letter code: MPPATGDIDRQIEQLMECKALSETEVKMLCEHAKTILVEEYNVQPVKCPVTVCGDIHGQFYDLIELFRIGGSSPDTNYLFMGDYVDRGYYSVETVSLLVALKVRYRDRLTILRGNHESRQITQVYGFYDECLRKYGNANVWKHFTDLFDYLPLTALIESQVFCLHGGLSPSLDTLDNIRSLDRIQEVPHEGPMCDLLWSDPDDRCGWGISPRGAGYTFGQDIATQFNHTNGLSLISRAHQLVMEGFNWCQEKNVVTVFSAPNYCYRCGNMAAILEIGENMDQNFLQFDPAPRQVEPETTRKTPDYFL.

Mn(2+) contacts are provided by Asp-55, His-57, Asp-83, and Asn-115. His-116 functions as the Proton donor in the catalytic mechanism. Residues His-165 and His-239 each coordinate Mn(2+). Residue Leu-307 is modified to Leucine methyl ester.

It belongs to the PPP phosphatase family. PP-2A subfamily. In terms of assembly, PP2A consists of a common heterodimeric core enzyme, composed of a 36 kDa catalytic subunit (subunit C) and a 65 kDa constant regulatory subunit (subunit A), that associates with a variety of regulatory subunits such as subunits B (the R2/B/PR55/B55, R3/B''/PR72/PR130/PR59 and R5/B'/B56 families). Also interacts with CHIP and TAF12B. Interacts with B'THETA. Interacts with CLC-A, CLC-B, CLC-C and CLC-G. It depends on Mn(2+) as a cofactor. In terms of processing, reversibly methyl esterified on Leu-307 by leucine carboxyl methyltransferase 1 (LCMT1) and pectin methylesterase 1 (PME1). Carboxyl methylation influences the affinity of the catalytic subunit for the different regulatory subunits, thereby modulating the PP2A holoenzyme's substrate specificity, enzyme activity and cellular localization. Phosphorylation of either threonine (by autophosphorylation-activated protein kinase) or tyrosine results in inactivation of the phosphatase. Auto-dephosphorylation has been suggested as a mechanism for reactivation. Post-translationally, ubiquitinated. CHIP-mediated ubiquitination enhances phosphatase activity after an abiotic stress such as low temperature or darkness.

The protein resides in the cytoplasm. The protein localises to the cytosol. It localises to the peroxisome. It catalyses the reaction O-phospho-L-seryl-[protein] + H2O = L-seryl-[protein] + phosphate. The enzyme catalyses O-phospho-L-threonyl-[protein] + H2O = L-threonyl-[protein] + phosphate. Associates with the serine/threonine-protein phosphatase PP2A regulatory subunits A and B' to positively regulates beta-oxidation of fatty acids and protoauxins in peroxisomes by dephosphorylating peroxisomal beta-oxidation-related proteins. Involved in the positive regulation of salt stress responses. May function by increasing chloride channel activities on vacuolar membranes. The protein is Serine/threonine-protein phosphatase PP2A-5 catalytic subunit of Arabidopsis thaliana (Mouse-ear cress).